We begin with the raw amino-acid sequence, 76 residues long: Translational regulator CsrA (76 aa).

This sequence belongs to the CsrA/RsmA family. Homodimer; the beta-strands of each monomer intercalate to form a hydrophobic core, while the alpha-helices form wings that extend away from the core.

Its subcellular location is the cytoplasm. Functionally, a translational regulator that binds mRNA to regulate translation initiation and/or mRNA stability. Usually binds in the 5'-UTR at or near the Shine-Dalgarno sequence preventing ribosome-binding, thus repressing translation. Its main target seems to be the major flagellin gene, while its function is anatagonized by FliW. In Pseudothermotoga lettingae (strain ATCC BAA-301 / DSM 14385 / NBRC 107922 / TMO) (Thermotoga lettingae), this protein is Translational regulator CsrA.